A 334-amino-acid polypeptide reads, in one-letter code: L-lactate dehydrogenase B chain (334 aa).

A2 is modified (N-acetylalanine). K7 bears the N6-acetyllysine mark. 2 positions are modified to phosphoserine: S11 and S44. NAD(+) is bound by residues G30 to K58 and R100. K58 bears the N6-acetyllysine mark. Substrate is bound at residue R107. K119 bears the N6-acetyllysine mark. An NAD(+)-binding site is contributed by N139. Substrate is bound by residues N139 and R170. H194 acts as the Proton acceptor in catalysis. The residue at position 240 (Y240) is a Phosphotyrosine. T249 contributes to the substrate binding site. At K329 the chain carries N6-acetyllysine.

It belongs to the LDH/MDH superfamily. LDH family. As to quaternary structure, homotetramer. Interacts with PTEN upstream reading frame protein MP31; the interaction leads to inhibition of mitochondrial lactate dehydrogenase activity, preventing conversion of lactate to pyruvate in mitochondria.

The protein resides in the cytoplasm. It is found in the mitochondrion inner membrane. The enzyme catalyses (S)-lactate + NAD(+) = pyruvate + NADH + H(+). Its pathway is fermentation; pyruvate fermentation to lactate; (S)-lactate from pyruvate: step 1/1. Functionally, interconverts simultaneously and stereospecifically pyruvate and lactate with concomitant interconversion of NADH and NAD(+). The protein is L-lactate dehydrogenase B chain (Ldhb) of Mus musculus (Mouse).